Consider the following 122-residue polypeptide: uncharacterized protein (122 aa).

This is an uncharacterized protein from Schizosaccharomyces pombe (strain 972 / ATCC 24843) (Fission yeast).